We begin with the raw amino-acid sequence, 356 residues long: UDP-N-acetylglucosamine--N-acetylmuramyl-(pentapeptide) pyrophosphoryl-undecaprenol N-acetylglucosamine transferase (356 aa).

Residues 12–14 (TGG), N124, R163, S188, I242, 261–266 (ALTVSE), and Q287 contribute to the UDP-N-acetyl-alpha-D-glucosamine site.

This sequence belongs to the glycosyltransferase 28 family. MurG subfamily.

It localises to the cell inner membrane. It catalyses the reaction di-trans,octa-cis-undecaprenyl diphospho-N-acetyl-alpha-D-muramoyl-L-alanyl-D-glutamyl-meso-2,6-diaminopimeloyl-D-alanyl-D-alanine + UDP-N-acetyl-alpha-D-glucosamine = di-trans,octa-cis-undecaprenyl diphospho-[N-acetyl-alpha-D-glucosaminyl-(1-&gt;4)]-N-acetyl-alpha-D-muramoyl-L-alanyl-D-glutamyl-meso-2,6-diaminopimeloyl-D-alanyl-D-alanine + UDP + H(+). The protein operates within cell wall biogenesis; peptidoglycan biosynthesis. Cell wall formation. Catalyzes the transfer of a GlcNAc subunit on undecaprenyl-pyrophosphoryl-MurNAc-pentapeptide (lipid intermediate I) to form undecaprenyl-pyrophosphoryl-MurNAc-(pentapeptide)GlcNAc (lipid intermediate II). The protein is UDP-N-acetylglucosamine--N-acetylmuramyl-(pentapeptide) pyrophosphoryl-undecaprenol N-acetylglucosamine transferase of Pseudomonas fluorescens (strain SBW25).